A 35-amino-acid polypeptide reads, in one-letter code: Photosystem II reaction center protein T (35 aa).

A helical membrane pass occupies residues 3–23 (ALVYTFLLVSTLGIIFFAIFF).

Belongs to the PsbT family. As to quaternary structure, PSII is composed of 1 copy each of membrane proteins PsbA, PsbB, PsbC, PsbD, PsbE, PsbF, PsbH, PsbI, PsbJ, PsbK, PsbL, PsbM, PsbT, PsbY, PsbZ, Psb30/Ycf12, at least 3 peripheral proteins of the oxygen-evolving complex and a large number of cofactors. It forms dimeric complexes.

It is found in the plastid. Its subcellular location is the chloroplast thylakoid membrane. In terms of biological role, found at the monomer-monomer interface of the photosystem II (PS II) dimer, plays a role in assembly and dimerization of PSII. PSII is a light-driven water plastoquinone oxidoreductase, using light energy to abstract electrons from H(2)O, generating a proton gradient subsequently used for ATP formation. This chain is Photosystem II reaction center protein T, found in Gossypium barbadense (Sea Island cotton).